The sequence spans 266 residues: 2-dehydro-3-deoxy-D-gluconate/2-dehydro-3-deoxy-phosphogluconate aldolase (266 aa).

Substrate-binding positions include 36 to 37 (ST), 123 to 125 (YNI), and 151 to 153 (KDS). Residue K151 is the Schiff-base intermediate with substrate of the active site.

This sequence belongs to the DapA family. KDPG aldolase subfamily. In terms of assembly, homotetramer; dimer of dimers.

The enzyme catalyses 2-dehydro-3-deoxy-6-phospho-D-gluconate = D-glyceraldehyde 3-phosphate + pyruvate. It catalyses the reaction 2-dehydro-3-deoxy-D-gluconate = D-glyceraldehyde + pyruvate. The catalysed reaction is 2-dehydro-3-deoxy-6-phospho-D-galactonate = D-glyceraldehyde 3-phosphate + pyruvate. It carries out the reaction 2-dehydro-3-deoxy-D-galactonate = D-glyceraldehyde + pyruvate. It functions in the pathway carbohydrate acid metabolism; 2-dehydro-3-deoxy-D-gluconate degradation; D-glyceraldehyde 3-phosphate and pyruvate from 2-dehydro-3-deoxy-D-gluconate: step 2/2. In terms of biological role, involved in the degradation of glucose via the Entner-Doudoroff pathway. Catalyzes the reversible cleavage of 2-keto-3-deoxy-6-phosphogluconate (KDPG) and 2-keto-3-deoxygluconate (KDG) forming pyruvate and glyceraldehyde 3-phosphate or glyceraldehyde, respectively. It is also able to catalyze the reversible cleavage of 2-keto-3-deoxy-6-phosphogalactonate (KDPGal) and 2-keto-3-deoxygalactonate (KDGal). It is equally active with both D- and L-glyceraldehyde. The chain is 2-dehydro-3-deoxy-D-gluconate/2-dehydro-3-deoxy-phosphogluconate aldolase from Picrophilus torridus (strain ATCC 700027 / DSM 9790 / JCM 10055 / NBRC 100828 / KAW 2/3).